A 473-amino-acid polypeptide reads, in one-letter code: MKTLYSLRRFYHVETLFNGTLALAGRDQETTGFAWWAGNARLINLSGKLLGAHVAHAGLIVFWAGAMNLFEVAHFVPEKPMYEQGLILLPHLATLGWGVGPGGEVIDTFPYFVSGVLHLISSAVLGFGGIYHALLGPETLEESFPFFGYVWKDRNKMTTILGIHLILLGIGAFLLVLKALYFGGVYDTWAPGGGDVRKIANLTLSPSLIFGYLLKSPFGGEGWIVSVDDLEDIIGGHVWLGSICILGGIWHILTKPFAWARRAFVWSGEAYLSYSLGALSIFGFTACCFVWFNNTAYPSEFYGPTGPEASQAQAFTFLVRDQRLGANVGSAQGPTGLGKYLMRSPTGEVIFGGETMRFWDLRAPWLEPLRGPNGLDLNRLKKDIQPWQERRSAEYMTHAPLGSLNSVGGVATEINAVNYVSPRSWLATSHFVLGFFFFIGHLWHAGRARAAAAGFEKGIDRDFEPVLSMTPLN.

A propeptide spanning residues 1–14 (MKTLYSLRRFYHVE) is cleaved from the precursor. The residue at position 15 (threonine 15) is an N-acetylthreonine. Residue threonine 15 is modified to Phosphothreonine. 5 helical membrane passes run 69–93 (LFEV…PHLA), 134–155 (LLGP…KDRN), 178–200 (KALY…RKIA), 255–275 (KPFA…LSYS), and 291–312 (WFNN…ASQA). Glutamate 367 is a binding site for [CaMn4O5] cluster. The chain crosses the membrane as a helical span at residues 447–471 (RARAAAAGFEKGIDRDFEPVLSMTP).

The protein belongs to the PsbB/PsbC family. PsbC subfamily. As to quaternary structure, PSII is composed of 1 copy each of membrane proteins PsbA, PsbB, PsbC, PsbD, PsbE, PsbF, PsbH, PsbI, PsbJ, PsbK, PsbL, PsbM, PsbT, PsbX, PsbY, PsbZ, Psb30/Ycf12, at least 3 peripheral proteins of the oxygen-evolving complex and a large number of cofactors. It forms dimeric complexes. Binds multiple chlorophylls and provides some of the ligands for the Ca-4Mn-5O cluster of the oxygen-evolving complex. It may also provide a ligand for a Cl- that is required for oxygen evolution. PSII binds additional chlorophylls, carotenoids and specific lipids. is required as a cofactor.

It is found in the plastid membrane. One of the components of the core complex of photosystem II (PSII). It binds chlorophyll and helps catalyze the primary light-induced photochemical processes of PSII. PSII is a light-driven water:plastoquinone oxidoreductase, using light energy to abstract electrons from H(2)O, generating O(2) and a proton gradient subsequently used for ATP formation. This Cuscuta exaltata (Tall dodder) protein is Photosystem II CP43 reaction center protein.